Reading from the N-terminus, the 286-residue chain is Phosphate import ATP-binding protein PstB (286 aa).

Positions 40 to 281 (IAVRNLDFYY…PREQRTQEYI (242 aa)) constitute an ABC transporter domain. 72-79 (GPSGCGKS) contacts ATP.

This sequence belongs to the ABC transporter superfamily. Phosphate importer (TC 3.A.1.7) family. The complex is composed of two ATP-binding proteins (PstB), two transmembrane proteins (PstC and PstA) and a solute-binding protein (PstS).

The protein resides in the cell inner membrane. It carries out the reaction phosphate(out) + ATP + H2O = ADP + 2 phosphate(in) + H(+). In terms of biological role, part of the ABC transporter complex PstSACB involved in phosphate import. Responsible for energy coupling to the transport system. The chain is Phosphate import ATP-binding protein PstB from Granulibacter bethesdensis (strain ATCC BAA-1260 / CGDNIH1).